A 611-amino-acid chain; its full sequence is Dolabella-3,7-dien-18-ol synthase TPS06 (611 aa).

The Mg(2+) site is built by Asp-363, Asp-367, Asp-507, Thr-511, and Glu-515. Residues 363-367 (DNTFD) carry the DDXXD motif; degenerate motif.

It belongs to the terpene synthase family. Tpsa subfamily. Mg(2+) serves as cofactor. It depends on Mn(2+) as a cofactor. Predominantly expressed in flowers but also in stems, siliques, roots and leaves.

The protein resides in the cytoplasm. The enzyme catalyses (2E,6E,10E)-geranylgeranyl diphosphate + H2O = (3E,7E)-dolabella-3,7-dien-18-ol + diphosphate. It functions in the pathway secondary metabolite biosynthesis; terpenoid biosynthesis. Functionally, involved in terpene biosynthesis in roots. Possesses sesquiterpene (C15) synthase activity and diterpene (C20) synthase activity in vitro. Possesses dolabella-3,7-dien-18-ol synthase activity in vitro. Catalyzes the formation of dolabella-3,7-dien-18-ol from geranylgeranyl diphosphate. The sequence is that of Dolabella-3,7-dien-18-ol synthase TPS06 from Arabidopsis thaliana (Mouse-ear cress).